The chain runs to 530 residues: UDP-glucuronosyltransferase 1A8 (530 aa).

The first 25 residues, 1-25 (MARTGWTSPIPLCVSLLLTCGFAEA), serve as a signal peptide directing secretion. N71, N292, and N344 each carry an N-linked (GlcNAc...) asparagine glycan. A helical transmembrane segment spans residues 488 to 504 (VIGFLLAVVLTVAFITF).

The protein belongs to the UDP-glycosyltransferase family. As to quaternary structure, homodimer. Homooligomer. Interacts with UGT1A1, UGT1A3, UGT1A4, UGT1A6, UGT1A7, UGT1A9 and UGT1A10 to form heterodimers. Isoform 1 interacts with isoform 2/i2 suggesting that oligomerization is involved in negative regulation of transferase activity by isoform 2. Isoform 1 also interacts with respective i2 isoforms of UGT1A1, UGT1A3, UGT1A4, UGT1A6, UGT1A7, UGT1A9 and UGT1A10. Expressed in kidney, colon and small intestine. Not expressed in liver. As to expression, expressed in liver, kidney, colon and small intestine.

The protein resides in the endoplasmic reticulum membrane. It catalyses the reaction glucuronate acceptor + UDP-alpha-D-glucuronate = acceptor beta-D-glucuronoside + UDP + H(+). The enzyme catalyses 17beta-estradiol + UDP-alpha-D-glucuronate = 17beta-estradiol 3-O-(beta-D-glucuronate) + UDP + H(+). The catalysed reaction is 17alpha-estradiol + UDP-alpha-D-glucuronate = 17alpha-estradiol 3-O-(beta-D-glucuronate) + UDP + H(+). It carries out the reaction estrone + UDP-alpha-D-glucuronate = estrone 3-O-(beta-D-glucuronate) + UDP + H(+). It catalyses the reaction 16alpha,17alpha-estriol + UDP-alpha-D-glucuronate = 16alpha,17alpha-estriol 3-O-(beta-D-glucuronate) + UDP + H(+). The enzyme catalyses 2-hydroxy-17beta-estradiol + UDP-alpha-D-glucuronate = 2-hydroxy-17beta-estradiol 3-O-(beta-D-glucuronate) + UDP + H(+). The catalysed reaction is 2-hydroxy-17beta-estradiol + UDP-alpha-D-glucuronate = 17beta-estradiol 2-O-(beta-D-glucuronate) + UDP + H(+). It carries out the reaction 2-hydroxyestrone + UDP-alpha-D-glucuronate = 2-hydroxyestrone 3-O-(beta-D-glucuronate) + UDP + H(+). It catalyses the reaction 4-hydroxy-17beta-estradiol + UDP-alpha-D-glucuronate = 4-hydroxy-17beta-estradiol 3-O-(beta-D-glucuronate) + UDP + H(+). The enzyme catalyses 4-hydroxy-17beta-estradiol + UDP-alpha-D-glucuronate = 17beta-estradiol 4-O-(beta-D-glucuronate) + UDP + H(+). The catalysed reaction is 4-hydroxyestrone + UDP-alpha-D-glucuronate = 4-hydroxyestrone 3-O-(beta-D-glucuronate) + UDP + H(+). It carries out the reaction 4-hydroxyestrone + UDP-alpha-D-glucuronate = estrone 4-O-(beta-D-glucuronate) + UDP + H(+). It catalyses the reaction 2-methoxy-17beta-estradiol + UDP-alpha-D-glucuronate = 2-methoxy-17beta-estradiol 3-O-(beta-D-glucuronate) + UDP + H(+). The enzyme catalyses 2-methoxyestrone + UDP-alpha-D-glucuronate = 2-methoxyestrone 3-O-(beta-D-glucuronate) + UDP + H(+). The catalysed reaction is 4-methoxy-17beta-estradiol + UDP-alpha-D-glucuronate = 4-methoxy-17beta-estradiol 3-O-(beta-D-glucuronate) + UDP + H(+). It carries out the reaction 4-methoxyestrone + UDP-alpha-D-glucuronate = 4-methoxyestrone 3-O-(beta-D-glucuronate) + UDP + H(+). It catalyses the reaction 17beta-hydroxy-5alpha-androstan-3-one + UDP-alpha-D-glucuronate = 5alpha-dihydrotestosterone 17-O-(beta-D-glucuronate) + UDP + H(+). The enzyme catalyses 5alpha-dihydrotestosterone 17-O-(beta-D-glucuronate) + UDP-alpha-D-glucuronate = 5alpha-dihydrotestosterone 17-O-[beta-D-glucuronosyl-(1-&gt;2)-glucuronate] + UDP + H(+). The catalysed reaction is prunetin + UDP-alpha-D-glucuronate = prunetin-4'-O-beta-D-glucuronide + UDP. It carries out the reaction prunetin + UDP-alpha-D-glucuronate = prunetin-5-O-beta-D-glucuronide + UDP. It catalyses the reaction candesartan + UDP-alpha-D-glucuronate = candesartan O-beta-D-glucuronoside + UDP. The enzyme catalyses mycophenolate + UDP-alpha-D-glucuronate = mycophenolate 7-O-beta-D-glucuronide + UDP + H(+). The catalysed reaction is (E)-ferulate + UDP-alpha-D-glucuronate = (E)-4-O-(beta-D-glucuronosyl)-ferulate + UDP + H(+). It carries out the reaction (E)-ferulate + UDP-alpha-D-glucuronate = (E)-ferulic acid beta-D-glucuronate ester + UDP. Its function is as follows. UDP-glucuronosyltransferase (UGT) that catalyzes phase II biotransformation reactions in which lipophilic substrates are conjugated with glucuronic acid to increase the metabolite's water solubility, thereby facilitating excretion into either the urine or bile. Essential for the elimination and detoxification of drugs, xenobiotics and endogenous compounds. Catalyzes the glucuronidation of endogenous steroid hormones such as androgens and estrogens. Produces dihydrotestosterone (DHT) diglucuronide from the DHT after two subsequent glucoronidation steps. Involved in the glucuronidation of the phytochemical ferulic acid at the phenolic or the carboxylic acid group. Also catalyzes the glucuronidation of the isoflavones genistein, daidzein, glycitein, formononetin, biochanin A and prunetin, which are phytoestrogens with anticancer and cardiovascular properties. Involved in the glucuronidation of the AGTR1 angiotensin receptor antagonist caderastan, a drug which can inhibit the effect of angiotensin II. Also metabolizes mycophenolate, an immunosuppressive agent. Functionally, lacks UGT glucuronidation activity but acts as a negative regulator of isoform 1. This Homo sapiens (Human) protein is UDP-glucuronosyltransferase 1A8.